A 429-amino-acid chain; its full sequence is Zinc-regulated GTPase metalloprotein activator 1 (429 aa).

A psi-PxLVp motif motif is present at residues 15-22 (GELPCLVT). GTP is bound at residue 78–85 (GYLGSGKS). Residues Cys-136, Cys-138, and Cys-139 each contribute to the Zn(2+) site. Positions 136–139 (CLCC) match the CXCC motif motif. Residues 139 to 143 (CSLKN) and 244 to 247 (NKYD) contribute to the GTP site. The region spanning 362 to 428 (RDWEVQRTKG…SIEELLRKTL (67 aa)) is the CobW C-terminal domain.

This sequence belongs to the SIMIBI class G3E GTPase family. ZNG1 subfamily.

It carries out the reaction GTP + H2O = GDP + phosphate + H(+). Zinc chaperone that directly transfers zinc cofactor to target metalloproteins, thereby activating them. Catalyzes zinc insertion into the active site of methionine aminopeptidase MAP1, which function to cleave the initiator methionine from polypeptides during or after protein translation. Mechanistically, the N-terminal psi-PxLVp motif binds to the C6H2-type zinc finger of inactive form of MAP1. After formation of the docked complex, zinc is transferred from the CXCC motif in the GTPase domain of ZNG1 to the zinc binding site in the peptidase domain of MAP1 in a process requiring GTP hydrolysis. GTP/GDP exchange is required for release of active MAP1. The protein is Zinc-regulated GTPase metalloprotein activator 1 of Saccharomyces cerevisiae (strain ATCC 204508 / S288c) (Baker's yeast).